A 177-amino-acid polypeptide reads, in one-letter code: Nucleoside triphosphate/diphosphate phosphatase (177 aa).

Arginine 23 functions as the Proton donor in the catalytic mechanism. Mg(2+) contacts are provided by asparagine 87, aspartate 103, aspartate 105, aspartate 107, aspartate 120, and glutamate 123.

This sequence belongs to the Ntdp family. Mg(2+) serves as cofactor.

The catalysed reaction is a ribonucleoside 5'-triphosphate + H2O = a ribonucleoside 5'-diphosphate + phosphate + H(+). It catalyses the reaction a ribonucleoside 5'-diphosphate + H2O = a ribonucleoside 5'-phosphate + phosphate + H(+). Functionally, has nucleoside phosphatase activity towards nucleoside triphosphates and nucleoside diphosphates. This Streptococcus pyogenes serotype M3 (strain ATCC BAA-595 / MGAS315) protein is Nucleoside triphosphate/diphosphate phosphatase.